We begin with the raw amino-acid sequence, 254 residues long: D-aminoacyl-tRNA deacylase (254 aa).

Residues Lys-61–Ile-85 form a disordered region. Residues Thr-65–Glu-84 show a composition bias toward polar residues.

Belongs to the DtdA deacylase family. Monomer. It depends on Zn(2+) as a cofactor.

The catalysed reaction is a D-aminoacyl-tRNA + H2O = a tRNA + a D-alpha-amino acid + H(+). It carries out the reaction glycyl-tRNA(Ala) + H2O = tRNA(Ala) + glycine + H(+). Its function is as follows. D-aminoacyl-tRNA deacylase with broad substrate specificity. By recycling D-aminoacyl-tRNA to D-amino acids and free tRNA molecules, this enzyme counteracts the toxicity associated with the formation of D-aminoacyl-tRNA entities in vivo. The chain is D-aminoacyl-tRNA deacylase from Methanococcus maripaludis (strain C5 / ATCC BAA-1333).